Consider the following 328-residue polypeptide: Malate dehydrogenase (328 aa).

12–18 (GAAGQIG) provides a ligand contact to NAD(+). 2 residues coordinate substrate: Arg-95 and Arg-101. NAD(+)-binding positions include Asn-108, Gln-115, and 132 to 134 (VGN). Substrate-binding residues include Asn-134 and Arg-165. Residue His-190 is the Proton acceptor of the active site.

This sequence belongs to the LDH/MDH superfamily. MDH type 2 family.

The enzyme catalyses (S)-malate + NAD(+) = oxaloacetate + NADH + H(+). Catalyzes the reversible oxidation of malate to oxaloacetate. The sequence is that of Malate dehydrogenase from Methylibium petroleiphilum (strain ATCC BAA-1232 / LMG 22953 / PM1).